We begin with the raw amino-acid sequence, 138 residues long: Large ribosomal subunit protein bL17 (138 aa).

This sequence belongs to the bacterial ribosomal protein bL17 family. Part of the 50S ribosomal subunit. Contacts protein L32.

The protein is Large ribosomal subunit protein bL17 of Nitrobacter hamburgensis (strain DSM 10229 / NCIMB 13809 / X14).